Consider the following 407-residue polypeptide: Arginine deiminase (407 aa).

Residue Cys397 is the Amidino-cysteine intermediate of the active site.

Belongs to the arginine deiminase family.

The protein resides in the cytoplasm. The catalysed reaction is L-arginine + H2O = L-citrulline + NH4(+). The protein operates within amino-acid degradation; L-arginine degradation via ADI pathway; carbamoyl phosphate from L-arginine: step 1/2. This Escherichia coli O6:H1 (strain CFT073 / ATCC 700928 / UPEC) protein is Arginine deiminase (arcA).